Reading from the N-terminus, the 505-residue chain is Glycerol kinase 3 (505 aa).

Thr12 is an ADP binding site. Residues Thr12, Thr13, and Ser14 each coordinate ATP. Residue Thr12 participates in sn-glycerol 3-phosphate binding. Arg16 provides a ligand contact to ADP. Sn-glycerol 3-phosphate-binding residues include Arg82, Glu83, Tyr134, and Asp249. Glycerol contacts are provided by Arg82, Glu83, Tyr134, Asp249, and Gln250. ADP is bound by residues Thr271 and Gly315. Residues Thr271, Gly315, Gln319, and Gly416 each contribute to the ATP site. Gly416 and Asn420 together coordinate ADP.

The protein belongs to the FGGY kinase family.

It catalyses the reaction glycerol + ATP = sn-glycerol 3-phosphate + ADP + H(+). The protein operates within polyol metabolism; glycerol degradation via glycerol kinase pathway; sn-glycerol 3-phosphate from glycerol: step 1/1. Inhibited by fructose 1,6-bisphosphate (FBP). In terms of biological role, key enzyme in the regulation of glycerol uptake and metabolism. Catalyzes the phosphorylation of glycerol to yield sn-glycerol 3-phosphate. The sequence is that of Glycerol kinase 3 from Streptomyces avermitilis (strain ATCC 31267 / DSM 46492 / JCM 5070 / NBRC 14893 / NCIMB 12804 / NRRL 8165 / MA-4680).